We begin with the raw amino-acid sequence, 162 residues long: ATP synthase subunit b (162 aa).

A helical transmembrane segment spans residues G16–L36.

This sequence belongs to the ATPase B chain family. F-type ATPases have 2 components, F(1) - the catalytic core - and F(0) - the membrane proton channel. F(1) has five subunits: alpha(3), beta(3), gamma(1), delta(1), epsilon(1). F(0) has three main subunits: a(1), b(2) and c(10-14). The alpha and beta chains form an alternating ring which encloses part of the gamma chain. F(1) is attached to F(0) by a central stalk formed by the gamma and epsilon chains, while a peripheral stalk is formed by the delta and b chains.

The protein resides in the cell membrane. In terms of biological role, f(1)F(0) ATP synthase produces ATP from ADP in the presence of a proton or sodium gradient. F-type ATPases consist of two structural domains, F(1) containing the extramembraneous catalytic core and F(0) containing the membrane proton channel, linked together by a central stalk and a peripheral stalk. During catalysis, ATP synthesis in the catalytic domain of F(1) is coupled via a rotary mechanism of the central stalk subunits to proton translocation. Functionally, component of the F(0) channel, it forms part of the peripheral stalk, linking F(1) to F(0). The protein is ATP synthase subunit b of Bacillus caldotenax.